We begin with the raw amino-acid sequence, 203 residues long: AFG2-interacting ribosome maturation factor (203 aa).

In terms of assembly, part of the 55LCC heterohexameric ATPase complex composed at least of AIRIM, AFG2A, AFG2B and CINP. Does not associate with pre-60S ribosomal particles. Phosphorylated on serines by CK2 kinase.

The protein resides in the nucleus. Its subcellular location is the cytoplasm. Its function is as follows. Part of the 55LCC heterohexameric ATPase complex which is chromatin-associated and promotes replisome proteostasis to maintain replication fork progression and genome stability. Required for replication fork progression, sister chromatid cohesion, and chromosome stability. The ATPase activity is specifically enhanced by replication fork DNA and is coupled to cysteine protease-dependent cleavage of replisome substrates in response to replication fork damage. Uses ATPase activity to process replisome substrates in S-phase, facilitating their proteolytic turnover from chromatin to ensure DNA replication and mitotic fidelity. Involved in the cytoplasmic maturation steps of pre-60S ribosomal particles by promoting the release of shuttling protein RSL24D1/RLP24 from the pre-ribosomal particles. This is AFG2-interacting ribosome maturation factor from Homo sapiens (Human).